The following is a 171-amino-acid chain: Secretion monitor (171 aa).

The N-terminal stretch at 1 to 30 (MIGILNRWRQFGRRYFWPHLLLGMVAASLG) is a signal peptide.

The protein belongs to the SecM family.

The protein resides in the cytoplasm. It is found in the cytosol. It localises to the periplasm. Its function is as follows. Regulates secA expression by translational coupling of the secM secA operon. Translational pausing at a specific Pro residue 5 residues before the end of the protein may allow disruption of a mRNA repressor helix that normally suppresses secA translation initiation. This is Secretion monitor from Pectobacterium atrosepticum (strain SCRI 1043 / ATCC BAA-672) (Erwinia carotovora subsp. atroseptica).